The primary structure comprises 395 residues: Alanine racemase 2 (395 aa).

Residue Lys-60 is the Proton acceptor; specific for D-alanine of the active site. N6-(pyridoxal phosphate)lysine is present on Lys-60. Arg-158 contacts substrate. Tyr-288 serves as the catalytic Proton acceptor; specific for L-alanine. Residue Met-332 participates in substrate binding.

Belongs to the alanine racemase family. The cofactor is pyridoxal 5'-phosphate.

It catalyses the reaction L-alanine = D-alanine. It participates in amino-acid biosynthesis; D-alanine biosynthesis; D-alanine from L-alanine: step 1/1. Functionally, catalyzes the interconversion of L-alanine and D-alanine. May also act on other amino acids. In Clostridium acetobutylicum (strain ATCC 824 / DSM 792 / JCM 1419 / IAM 19013 / LMG 5710 / NBRC 13948 / NRRL B-527 / VKM B-1787 / 2291 / W), this protein is Alanine racemase 2 (alr2).